Reading from the N-terminus, the 760-residue chain is Transferrin receptor protein 1 (760 aa).

The Cytoplasmic portion of the chain corresponds to 1 to 67; it reads MMDQARSAFS…KPKRCSGSIC (67 aa). Positions 1–67 are mediates interaction with SH3BP4; the sequence is MMDQARSAFS…KPKRCSGSIC (67 aa). Phosphoserine is present on residues Ser-10 and Ser-19. Tyr-20 is subject to Phosphotyrosine. Residues 20 to 23 carry the Endocytosis signal motif; that stretch reads YTRF. The residue at position 21 (Thr-21) is a Phosphothreonine. Ser-24 is modified (phosphoserine). The Stop-transfer sequence signature appears at 58 to 61; sequence KPKR. S-palmitoyl cysteine attachment occurs at residues Cys-62 and Cys-67. A helical; Signal-anchor for type II membrane protein transmembrane segment spans residues 68–88; that stretch reads YGTIAVIVFFLIGFMIGYLGY. The Extracellular segment spans residues 89–760; that stretch reads CKGVEPKTEC…GDVWDIDNEF (672 aa). An O-linked (GalNAc...) threonine glycan is attached at Thr-104. Positions 223-313 constitute a PA domain; it reads SKAATVTGKL…GTGDPYTPGF (91 aa). 2 N-linked (GlcNAc...) asparagine glycosylation sites follow: Asn-251 and Asn-317. Positions 569–760 are ligand-binding; it reads TMDTYKELIE…GDVWDIDNEF (192 aa). The Cell attachment site; required for binding to transferrin motif lies at 646–648; it reads RGD. N-linked (GlcNAc...) asparagine glycosylation occurs at Asn-727.

The protein belongs to the peptidase M28 family. M28B subfamily. In terms of assembly, homodimer; disulfide-linked. Binds one transferrin or HFE molecule per subunit. Binds the HLA class II histocompatibility antigen, DR1. Interacts with SH3BP3. Interacts with STEAP3; facilitates TFRC endocytosis in erythroid precursor cells. Interacts with GRM2. (Microbial infection) Interacts with Guanarito, Junin and Machupo arenavirus glycoprotein complex. As to quaternary structure, (Microbial infection) Interacts with rabies virus protein G. In terms of assembly, (Microbial infection) Interacts with SARS-CoV-2 spike protein S. Post-translationally, stearoylated by ZDHHC6 which inhibits TFRC-mediated activation of the JNK pathway and promotes mitochondrial fragmentation. Stearoylation does not affect iron uptake. In terms of processing, N- and O-glycosylated, phosphorylated and palmitoylated. The serum form is only glycosylated. Proteolytically cleaved on Arg-100 to produce the soluble serum form (sTfR). Post-translationally, palmitoylated on both Cys-62 and Cys-67. Cys-62 seems to be the major site of palmitoylation.

It is found in the cell membrane. The protein resides in the melanosome. It localises to the secreted. Its function is as follows. Cellular uptake of iron occurs via receptor-mediated endocytosis of ligand-occupied transferrin receptor into specialized endosomes. Endosomal acidification leads to iron release. The apotransferrin-receptor complex is then recycled to the cell surface with a return to neutral pH and the concomitant loss of affinity of apotransferrin for its receptor. Transferrin receptor is necessary for development of erythrocytes and the nervous system. A second ligand, the hereditary hemochromatosis protein HFE, competes for binding with transferrin for an overlapping C-terminal binding site. Positively regulates T and B cell proliferation through iron uptake. Acts as a lipid sensor that regulates mitochondrial fusion by regulating activation of the JNK pathway. When dietary levels of stearate (C18:0) are low, promotes activation of the JNK pathway, resulting in HUWE1-mediated ubiquitination and subsequent degradation of the mitofusin MFN2 and inhibition of mitochondrial fusion. When dietary levels of stearate (C18:0) are high, TFRC stearoylation inhibits activation of the JNK pathway and thus degradation of the mitofusin MFN2. Mediates uptake of NICOL1 into fibroblasts where it may regulate extracellular matrix production. (Microbial infection) Acts as a receptor for new-world arenaviruses: Guanarito, Junin and Machupo virus. Functionally, (Microbial infection) Acts as a host entry factor for rabies virus that hijacks the endocytosis of TFRC to enter cells. In terms of biological role, (Microbial infection) Acts as a host entry factor for SARS-CoV, MERS-CoV and SARS-CoV-2 viruses that hijack the endocytosis of TFRC to enter cells. This chain is Transferrin receptor protein 1 (TFRC), found in Homo sapiens (Human).